An 87-amino-acid polypeptide reads, in one-letter code: Small ribosomal subunit protein uS15 (87 aa).

The protein belongs to the universal ribosomal protein uS15 family. In terms of assembly, part of the 30S ribosomal subunit. Forms a bridge to the 50S subunit in the 70S ribosome, contacting the 23S rRNA.

Its function is as follows. One of the primary rRNA binding proteins, it binds directly to 16S rRNA where it helps nucleate assembly of the platform of the 30S subunit by binding and bridging several RNA helices of the 16S rRNA. Functionally, forms an intersubunit bridge (bridge B4) with the 23S rRNA of the 50S subunit in the ribosome. In Clostridium kluyveri (strain NBRC 12016), this protein is Small ribosomal subunit protein uS15.